A 73-amino-acid polypeptide reads, in one-letter code: Cell division protein ZapB (73 aa).

Residues 3–67 are a coiled coil; it reads LELLSKLETK…WNDKVTGLVG (65 aa).

Belongs to the ZapB family. In terms of assembly, homodimer. The ends of the coiled-coil dimer bind to each other, forming polymers. Interacts with FtsZ.

It localises to the cytoplasm. In terms of biological role, non-essential, abundant cell division factor that is required for proper Z-ring formation. It is recruited early to the divisome by direct interaction with FtsZ, stimulating Z-ring assembly and thereby promoting cell division earlier in the cell cycle. Its recruitment to the Z-ring requires functional FtsA or ZipA. In Shewanella sp. (strain ANA-3), this protein is Cell division protein ZapB.